The primary structure comprises 493 residues: Rop guanine nucleotide exchange factor 10 (493 aa).

2 disordered regions span residues Met1–Met45 and Gly400–Ala423. A compositionally biased stretch (basic and acidic residues) spans Asp17 to Ala27. One can recognise a PRONE domain in the interval Arg35 to Glu401.

Its function is as follows. Guanine-nucleotide exchange factor (GEF) that acts as an activator of Rop (Rho of plants) GTPases by promoting the exchange of GDP for GTP. This Arabidopsis thaliana (Mouse-ear cress) protein is Rop guanine nucleotide exchange factor 10 (ROPGEF10).